Here is a 654-residue protein sequence, read N- to C-terminus: Acetyl-coenzyme A synthetase (654 aa).

CoA contacts are provided by residues 193–196 (RRGK) and Thr313. ATP is bound by residues 389–391 (GEP), 413–418 (DTWWQT), Asp506, and Arg521. Ser529 is a binding site for CoA. Arg532 serves as a coordination point for ATP. 2 residues coordinate Mg(2+): His545 and Val548. An N6-acetyllysine modification is found at Lys619.

The protein belongs to the ATP-dependent AMP-binding enzyme family. It depends on Mg(2+) as a cofactor. Post-translationally, acetylated. Deacetylation by the SIR2-homolog deacetylase activates the enzyme.

The enzyme catalyses acetate + ATP + CoA = acetyl-CoA + AMP + diphosphate. Functionally, catalyzes the conversion of acetate into acetyl-CoA (AcCoA), an essential intermediate at the junction of anabolic and catabolic pathways. AcsA undergoes a two-step reaction. In the first half reaction, AcsA combines acetate with ATP to form acetyl-adenylate (AcAMP) intermediate. In the second half reaction, it can then transfer the acetyl group from AcAMP to the sulfhydryl group of CoA, forming the product AcCoA. In Wolinella succinogenes (strain ATCC 29543 / DSM 1740 / CCUG 13145 / JCM 31913 / LMG 7466 / NCTC 11488 / FDC 602W) (Vibrio succinogenes), this protein is Acetyl-coenzyme A synthetase.